The primary structure comprises 426 residues: Serine--tRNA ligase (426 aa).

233–235 is an L-serine binding site; that stretch reads TAE. 264-266 is an ATP binding site; the sequence is RSE. Glutamate 287 contributes to the L-serine binding site. ATP is bound at residue 351-354; the sequence is EISS. Serine 387 provides a ligand contact to L-serine.

It belongs to the class-II aminoacyl-tRNA synthetase family. Type-1 seryl-tRNA synthetase subfamily. In terms of assembly, homodimer. The tRNA molecule binds across the dimer.

The protein localises to the cytoplasm. The enzyme catalyses tRNA(Ser) + L-serine + ATP = L-seryl-tRNA(Ser) + AMP + diphosphate + H(+). It carries out the reaction tRNA(Sec) + L-serine + ATP = L-seryl-tRNA(Sec) + AMP + diphosphate + H(+). Its pathway is aminoacyl-tRNA biosynthesis; selenocysteinyl-tRNA(Sec) biosynthesis; L-seryl-tRNA(Sec) from L-serine and tRNA(Sec): step 1/1. Its function is as follows. Catalyzes the attachment of serine to tRNA(Ser). Is also able to aminoacylate tRNA(Sec) with serine, to form the misacylated tRNA L-seryl-tRNA(Sec), which will be further converted into selenocysteinyl-tRNA(Sec). This chain is Serine--tRNA ligase, found in Stutzerimonas stutzeri (strain A1501) (Pseudomonas stutzeri).